Consider the following 166-residue polypeptide: MKYTSYILAFQLCIILGSSSCYSQDTVNKEIEDLKGYFNASNSNVSDGGSLFLDILDKWKEESDKKVIQSQIVSFYFKLFEHLKDNKIIQRSMDTIKGDLFAKFFNSSTNKLQDFLKVSQVQVNDLKIQRKAVSELKKVMNDLLPHSTLRKRKRSQSSIRGRRASK.

Positions 1-23 (MKYTSYILAFQLCIILGSSSCYS) are cleaved as a signal peptide. The residue at position 24 (glutamine 24) is a Pyrrolidone carboxylic acid. N-linked (GlcNAc...) asparagine glycosylation is found at asparagine 39, asparagine 44, and asparagine 106.

It belongs to the type II (or gamma) interferon family. As to quaternary structure, homodimer. As to expression, released primarily from activated T lymphocytes.

It localises to the secreted. Its function is as follows. Produced by lymphocytes activated by specific antigens or mitogens. IFN-gamma, in addition to having antiviral activity, has important immunoregulatory functions. It is a potent activator of macrophages, it has antiproliferative effects on transformed cells and it can potentiate the antiviral and antitumor effects of the type I interferons. This chain is Interferon gamma (IFNG), found in Marmota monax (Woodchuck).